The sequence spans 290 residues: Arylamine N-acetyltransferase 2 (290 aa).

The active-site Acyl-thioester intermediate is Cys-68. CoA-binding residues include Thr-103 and Gly-104. 106–107 (VH) is a substrate binding site. Active-site residues include His-107 and Asp-122. Positions 208, 214, and 287 each coordinate CoA.

This sequence belongs to the arylamine N-acetyltransferase family.

It localises to the cytoplasm. The enzyme catalyses an arylamine + acetyl-CoA = an N-acetylarylamine + CoA. It carries out the reaction an N-hydroxyarylamine + acetyl-CoA = an N-acetoxyarylamine + CoA. In terms of biological role, catalyzes the N- or O-acetylation of various arylamine and heterocyclic amine substrates. Participates in the detoxification of a plethora of hydrazine and arylamine drugs, and is able to bioactivate several known carcinogens. This is Arylamine N-acetyltransferase 2 (NAT2) from Homo sapiens (Human).